The sequence spans 185 residues: Ribosome-recycling factor (185 aa).

Residues 140–166 (KRQEKDGDITEDEQRSLEKQVQKVTDD) form a disordered region.

Belongs to the RRF family.

Its subcellular location is the cytoplasm. Functionally, responsible for the release of ribosomes from messenger RNA at the termination of protein biosynthesis. May increase the efficiency of translation by recycling ribosomes from one round of translation to another. The sequence is that of Ribosome-recycling factor from Lactobacillus johnsonii (strain CNCM I-12250 / La1 / NCC 533).